The primary structure comprises 86 residues: Small muscular protein (86 aa).

Positions 20–64 are disordered; it reads MGAFRPGAGQPPRRKECTPEIEEGAPPTSDEEKKPIPGAKKLPGP.

The protein belongs to the SMPX family.

Its function is as follows. Plays a role in the regulatory network through which muscle cells coordinate their structural and functional states during growth, adaptation, and repair. This is Small muscular protein (SMPX) from Bos taurus (Bovine).